A 71-amino-acid chain; its full sequence is Small ribosomal subunit protein bS21 (71 aa).

The interval 43–71 (TERKRAKASAVKRHAKKLARENARRTRLY) is disordered. Residues 46–59 (KRAKASAVKRHAKK) are compositionally biased toward basic residues. The segment covering 60 to 71 (LARENARRTRLY) has biased composition (basic and acidic residues).

Belongs to the bacterial ribosomal protein bS21 family.

The polypeptide is Small ribosomal subunit protein bS21 (Pectobacterium atrosepticum (strain SCRI 1043 / ATCC BAA-672) (Erwinia carotovora subsp. atroseptica)).